We begin with the raw amino-acid sequence, 387 residues long: [LysW]-aminoadipate semialdehyde/glutamate semialdehyde transaminase (387 aa).

Residues Gly-96–Thr-97 and Phe-123 each bind pyridoxal 5'-phosphate. Position 126 (Arg-126) interacts with substrate. Residue Asp-207 to Gln-210 coordinates pyridoxal 5'-phosphate. Residue Lys-236 is modified to N6-(pyridoxal phosphate)lysine. Ser-264 contributes to the substrate binding site. A pyridoxal 5'-phosphate-binding site is contributed by Thr-265.

The protein belongs to the class-III pyridoxal-phosphate-dependent aminotransferase family. LysJ subfamily. Homodimer. Pyridoxal 5'-phosphate is required as a cofactor.

It is found in the cytoplasm. The catalysed reaction is [amino-group carrier protein]-C-terminal-gamma-(L-lysyl)-L-glutamate + 2-oxoglutarate = [amino-group carrier protein]-C-terminal-N-(1-carboxy-5-oxopentan-1-yl)-L-glutamine + L-glutamate. It carries out the reaction [amino-group carrier protein]-C-terminal-gamma-(L-ornithyl)-L-glutamate + 2-oxoglutarate = [amino-group carrier protein]-C-terminal-gamma-(L-glutamyl-5-semialdehyde)-L-glutamate + L-glutamate. It functions in the pathway amino-acid biosynthesis; L-lysine biosynthesis via AAA pathway; L-lysine from L-alpha-aminoadipate (Thermus route): step 4/5. The protein operates within amino-acid biosynthesis; L-arginine biosynthesis. Involved in both the arginine and lysine biosynthetic pathways. The polypeptide is [LysW]-aminoadipate semialdehyde/glutamate semialdehyde transaminase (Sulfurisphaera tokodaii (strain DSM 16993 / JCM 10545 / NBRC 100140 / 7) (Sulfolobus tokodaii)).